We begin with the raw amino-acid sequence, 3953 residues long: Zinc finger protein 469 (3953 aa).

14 disordered regions span residues 1 to 274, 313 to 465, 512 to 672, 763 to 784, 869 to 1383, 1400 to 1461, 1575 to 1610, 1703 to 1864, 1884 to 1947, 1991 to 2030, 2070 to 2700, 2716 to 2915, 3001 to 3036, and 3072 to 3110; these read MPGE…VSFQ, WPEE…MFFN, EWQG…FPFP, GHQRSPGPPGLPSPPAAPRVPA, ADEE…HSEL, PKPS…DLPV, LQRSKDTRGAPRELAEAESVGRVELGTGTEPPSQRR, SKTG…GASS, VSNT…TVEG, KTQGQGTANQLQPENGVSPGGTDNHASVNASPKTALTGPT, LTAA…TLGP, AGET…LSDS, EMPAPADDSSSSLGDVSPEPPSLERERCDGGLPGNT, and GPSFLDFEGTASSQGPQSRRTEEAAGAGRAQGRGRPAKG. A compositionally biased stretch (polar residues) spans 187–198; that stretch reads PPSSFTSTNYTS. 2 stretches are compositionally biased toward pro residues: residues 202-211 and 324-335; these read TPRPPAPGPP and YPLPTQPAPSPL. The segment covering 603 to 623 has biased composition (low complexity); it reads STCSSLSPMSSSPANPSSEES. 2 stretches are compositionally biased toward pro residues: residues 768 to 780 and 896 to 911; these read PGPPGLPSPPAAP and KAPPPLPAATPDPQTP. A compositionally biased stretch (basic residues) spans 944 to 953; the sequence is QQRRGKQLKL. Over residues 963-975 the composition is skewed to gly residues; sequence AAEGSGSGGGGRA. Basic and acidic residues predominate over residues 981–991; that stretch reads RRNDGLGERPP. Low complexity predominate over residues 1005–1017; that stretch reads RADPAPRVPRAAA. Composition is skewed to basic residues over residues 1025–1042 and 1058–1070; these read SRRRRLPPRKDPRKRKAR and KNRRHRRLGRRAG. A compositionally biased stretch (basic and acidic residues) spans 1082-1093; it reads PGAEDRRLREYD. Over residues 1094 to 1103 the composition is skewed to acidic residues; sequence FASESEEDEQ. Residues 1120 to 1137 are compositionally biased toward basic and acidic residues; that stretch reads KRKEVELTQGPREDEPQK. Low complexity predominate over residues 1158-1177; it reads PGGSRPGPGRSPQARGPSRS. The segment covering 1213 to 1229 has biased composition (basic and acidic residues); sequence EETRPSLDFPQEAKEPE. Polar residues-rich tracts occupy residues 1278 to 1290 and 1333 to 1350; these read PKPSGSLANTAPH and NPSSTACPKPSVLSSKIS. The span at 1577–1595 shows a compositional bias: basic and acidic residues; it reads RSKDTRGAPRELAEAESVG. Polar residues-rich tracts occupy residues 1991–2005 and 2014–2024; these read KTQGQGTANQLQPEN and NHASVNASPKT. Basic and acidic residues predominate over residues 2243–2262; sequence DTPKDSTLRIPEDSRKEKLW. A compositionally biased stretch (polar residues) spans 2409-2435; the sequence is TAPSSTASDFQSDSPQSHRNASHQTPQ. The C2H2-type 1 zinc-finger motif lies at 2472 to 2498; the sequence is VTCEVCAASFRSGPGLSRHKARKHRPH. Positions 2488 to 2498 are enriched in basic residues; sequence SRHKARKHRPH. The segment covering 2506 to 2521 has biased composition (low complexity); the sequence is SPAALPAQQPLEPLAQ. The segment covering 2534 to 2546 has biased composition (basic and acidic residues); the sequence is SGKERPNHSRGDP. Low complexity predominate over residues 2565–2574; it reads PGSPHSQQLH. Over residues 2592–2631 the composition is skewed to basic and acidic residues; it reads PRPDQAREDELHPKQAEKREGRRWRREPTVDSPSHSEGKS. Positions 2632 to 2642 are enriched in basic residues; sequence NKKRGKLRGRR. Residues 2664 to 2676 are compositionally biased toward low complexity; the sequence is PSPAMASYAASPS. Positions 2777–2787 are enriched in basic and acidic residues; the sequence is DSSRAHSRSEE. Low complexity predominate over residues 2805-2816; it reads TSSSPADSTTSS. Basic residues predominate over residues 2869 to 2879; it reads LTRKRNPHVYG. The span at 3095-3105 shows a compositional bias: low complexity; the sequence is AAGAGRAQGRG. Residues 3115–3137 form a C2H2-type 2 zinc finger; it reads YKCKVCFQRFRSLGELDLHKLAH. A disordered region spans residues 3232–3322; the sequence is TEPAPKHHRG…PDPWAGGEPL (91 aa). Positions 3260–3272 are enriched in basic and acidic residues; it reads GEAKKDSPGERAK. The segment covering 3302 to 3314 has biased composition (pro residues); it reads PGPPRTTPSPSPD. 2 consecutive C2H2-type zinc fingers follow at residues 3337–3359 and 3365–3388; these read RDCHHCGKRFPKPFKLQRHLAVH and YLCPRCPRVYPEHGELLAHLGGAH. The segment at 3418-3442 adopts a C2H2-type 5; degenerate zinc-finger fold; sequence FACSSCNYTFAKKEQFDRHMNKHLR. Disordered regions lie at residues 3448–3501, 3518–3559, and 3576–3925; these read FAFR…PILS, STTK…SPFP, and ERPE…HRTA. Over residues 3584-3602 the composition is skewed to low complexity; the sequence is PGSPGPLLQQALPLGASLP. The span at 3633–3651 shows a compositional bias: basic and acidic residues; sequence CAPDHFQEDHLLQKEKEVS. 2 stretches are compositionally biased toward low complexity: residues 3728-3741 and 3749-3759; these read PGPSSQGSGSPRPG and QPQPASGQLQS. Composition is skewed to basic and acidic residues over residues 3876-3892 and 3915-3925; these read EQRKAEPGHTQRKDRLG and EPAEPHTHRTA.

The protein belongs to the krueppel C2H2-type zinc-finger protein family. Detected in cornea, sclera, skin fibroblasts and striated muscle.

Its subcellular location is the nucleus. Functionally, may be involved in transcriptional regulation. The sequence is that of Zinc finger protein 469 (ZNF469) from Homo sapiens (Human).